A 96-amino-acid chain; its full sequence is Co-chaperonin GroES (96 aa).

The protein belongs to the GroES chaperonin family. In terms of assembly, heptamer of 7 subunits arranged in a ring. Interacts with the chaperonin GroEL.

It is found in the cytoplasm. Functionally, together with the chaperonin GroEL, plays an essential role in assisting protein folding. The GroEL-GroES system forms a nano-cage that allows encapsulation of the non-native substrate proteins and provides a physical environment optimized to promote and accelerate protein folding. GroES binds to the apical surface of the GroEL ring, thereby capping the opening of the GroEL channel. This chain is Co-chaperonin GroES, found in Holospora obtusa.